The following is a 195-amino-acid chain: Imidazoleglycerol-phosphate dehydratase (195 aa).

This sequence belongs to the imidazoleglycerol-phosphate dehydratase family.

The protein localises to the cytoplasm. It catalyses the reaction D-erythro-1-(imidazol-4-yl)glycerol 3-phosphate = 3-(imidazol-4-yl)-2-oxopropyl phosphate + H2O. Its pathway is amino-acid biosynthesis; L-histidine biosynthesis; L-histidine from 5-phospho-alpha-D-ribose 1-diphosphate: step 6/9. The chain is Imidazoleglycerol-phosphate dehydratase from Aminomonas aminovorus.